The sequence spans 258 residues: MSSTLSNEESGLGDSNRSTEVDGGDGGNFTAYESRFQSQRFDSSFSNFDSQPEKESDLPCGDSSPRPETQSPPSINSFDDTNDSILPPPSAMEKEEGFALREWRRLNALRLEEKEKEEKEMVQQILEAAEQYKAEFYSKRNVTIENNKKLNREKEKFFLENQEKFYAEADKNNWKAIAELIPREVPVIENRGNKKKTATITVIQGPKPGKPTDLSRMRQVLTKLKHNPPTHMKPKLPSPSGADPNVSVSEQVTVTEKL.

The segment covering 1–18 has biased composition (polar residues); it reads MSSTLSNEESGLGDSNRS. The tract at residues 1 to 96 is disordered; it reads MSSTLSNEES…PPPSAMEKEE (96 aa). The residue at position 2 (S2) is an N-acetylserine. Over residues 34 to 50 the composition is skewed to low complexity; the sequence is SRFQSQRFDSSFSNFDS. Positions 66 to 79 are enriched in polar residues; sequence RPETQSPPSINSFD. Positions 90 to 152 are involved in binding clathrin heavy chain; that stretch reads SAMEKEEGFA…TIENNKKLNR (63 aa). Residues 105-164 adopt a coiled-coil conformation; it reads RLNALRLEEKEKEEKEMVQQILEAAEQYKAEFYSKRNVTIENNKKLNREKEKFFLENQEK. Residues 224–234 show a composition bias toward basic residues; it reads LKHNPPTHMKP. The segment at 224 to 258 is disordered; the sequence is LKHNPPTHMKPKLPSPSGADPNVSVSEQVTVTEKL. Positions 246-258 are enriched in polar residues; the sequence is VSVSEQVTVTEKL.

This sequence belongs to the clathrin light chain family. As to quaternary structure, clathrin coats are formed from molecules containing 3 heavy chains and 3 light chains.

Its subcellular location is the cytoplasmic vesicle membrane. It is found in the membrane. The protein resides in the coated pit. Clathrin is the major protein of the polyhedral coat of coated pits and vesicles. This chain is Clathrin light chain 3, found in Arabidopsis thaliana (Mouse-ear cress).